The following is a 25-amino-acid chain: Non-specific lipid-transfer protein 3 (25 aa).

As to expression, seeds (at protein level).

In terms of biological role, plant non-specific lipid-transfer proteins transfer phospholipids as well as galactolipids across membranes. May play a role in wax or cutin deposition in the cell walls of expanding epidermal cells and certain secretory tissues. Has antibacterial and antifungal activity. Displays antibacterial activity towards both Gram-negative bacteria, P.carotovorum (IC(50)=11.5 uM) and P.syringae (IC(50)=12.0 uM), and Gram-positive bacterium C.michiganensis subsp michiganense (IC(50)=11.2 uM). Also displays antifungal activity towards A.niger VKM F-33 (IC(50)=1.05 uM) and B.cinerea TSKHA (IC(50)=1.88 uM) and relatively moderate activity towards B.sorokiniana VKM F-1448 (IC(50)=1.55 uM). Displays some inhibitory activity towards P.infestans OSV12. This Nigella sativa (Black cumin) protein is Non-specific lipid-transfer protein 3.